The primary structure comprises 174 residues: Gamma-crystallin F (174 aa).

2 Beta/gamma crystallin 'Greek key' domains span residues glycine 2–serine 40 and glycine 41–proline 83. The connecting peptide stretch occupies residues histidine 84–serine 87. Beta/gamma crystallin 'Greek key' domains lie at histidine 88–glutamate 128 and glycine 129–valine 171.

The protein belongs to the beta/gamma-crystallin family.

Functionally, crystallins are the dominant structural components of the vertebrate eye lens. This is Gamma-crystallin F (CRYGF) from Bos taurus (Bovine).